The chain runs to 107 residues: MDFIRCHVAMQIINFKALEIDKRSLLGILVIKNIKNLHRSNQLLTRLSDLMVPSVIHNGEFVMRNDKSDKLWIFVGESWASLDLEDLNGVRENVFNISKTVPLLIQG.

The polypeptide is Protein beta (beta) (Bovine ephemeral fever virus (strain BB7721) (BEFV)).